The following is a 229-amino-acid chain: Glycerol-3-phosphate acyltransferase (229 aa).

The next 6 helical transmembrane spans lie at 2 to 22, 56 to 76, 93 to 113, 129 to 149, 151 to 171, and 178 to 198; these read WSLTVILLISYFLGSIPGALW, LATVVDFGKGFLAAGVVASVI, FVVLGLLAGVGAVIGHMYPIF, LFALTPLTMAITLAVFVAVLL, SRYVSLSSITAAVAFPTIVAL, and ADLDPSLLVFGGLLALSIVVA.

The protein belongs to the PlsY family. As to quaternary structure, probably interacts with PlsX.

The protein resides in the cell inner membrane. It catalyses the reaction an acyl phosphate + sn-glycerol 3-phosphate = a 1-acyl-sn-glycero-3-phosphate + phosphate. It participates in lipid metabolism; phospholipid metabolism. In terms of biological role, catalyzes the transfer of an acyl group from acyl-phosphate (acyl-PO(4)) to glycerol-3-phosphate (G3P) to form lysophosphatidic acid (LPA). This enzyme utilizes acyl-phosphate as fatty acyl donor, but not acyl-CoA or acyl-ACP. This is Glycerol-3-phosphate acyltransferase from Salinibacter ruber (strain DSM 13855 / M31).